A 236-amino-acid chain; its full sequence is 2,3,4,5-tetrahydropyridine-2,6-dicarboxylate N-acetyltransferase (236 aa).

The protein belongs to the transferase hexapeptide repeat family. DapH subfamily.

It carries out the reaction (S)-2,3,4,5-tetrahydrodipicolinate + acetyl-CoA + H2O = L-2-acetamido-6-oxoheptanedioate + CoA. The protein operates within amino-acid biosynthesis; L-lysine biosynthesis via DAP pathway; LL-2,6-diaminopimelate from (S)-tetrahydrodipicolinate (acetylase route): step 1/3. Functionally, catalyzes the transfer of an acetyl group from acetyl-CoA to tetrahydrodipicolinate. The protein is 2,3,4,5-tetrahydropyridine-2,6-dicarboxylate N-acetyltransferase of Clostridium perfringens (strain SM101 / Type A).